Here is a 33-residue protein sequence, read N- to C-terminus: GIMDTLKNLAKTAGKGALQSLLKMASCKLSGQC.

Cysteine 27 and cysteine 33 form a disulfide bridge.

Expressed by the skin glands.

Its subcellular location is the secreted. Functionally, antimicrobial peptide. The protein is Brevinin-2Rh of Pelophylax ridibundus (Marsh frog).